The sequence spans 241 residues: Interleukin-6 (241 aa).

The signal sequence occupies residues 1–26 (MNSFTSALRPGPLGCSLALLLVVATA). The segment at 32–51 (PVREDSNTKASPDKTLTPPG) is disordered. 2 disulfide bridges follow: cysteine 72–cysteine 78 and cysteine 101–cysteine 111. N-linked (GlcNAc...) asparagine glycosylation occurs at asparagine 108.

The protein belongs to the IL-6 superfamily. In terms of assembly, component of a hexamer of two molecules each of IL6, IL6R and IL6ST; first binds to IL6R to associate with the signaling subunit IL6ST. Interacts with IL6R (via the N-terminal ectodomain); this interaction may be affected by IL6R-binding with SORL1, hence decreasing IL6 cis signaling. Interacts with SORL1 (via the N-terminal ectodomain); this interaction leads to IL6 internalization and lysosomal degradation. May form a trimeric complex with the soluble SORL1 ectodomain and soluble IL6R receptor; this interaction might stabilize circulating IL6, hence promoting IL6 trans signaling.

The protein resides in the secreted. In terms of biological role, cytokine with a wide variety of biological functions in immunity, tissue regeneration, and metabolism. Binds to IL6R, then the complex associates to the signaling subunit IL6ST/gp130 to trigger the intracellular IL6-signaling pathway. The interaction with the membrane-bound IL6R and IL6ST stimulates 'classic signaling', whereas the binding of IL6 and soluble IL6R to IL6ST stimulates 'trans-signaling'. Alternatively, 'cluster signaling' occurs when membrane-bound IL6:IL6R complexes on transmitter cells activate IL6ST receptors on neighboring receiver cells. Its function is as follows. IL6 is a potent inducer of the acute phase response. Rapid production of IL6 contributes to host defense during infection and tissue injury, but excessive IL6 synthesis is involved in disease pathology. In the innate immune response, is synthesized by myeloid cells, such as macrophages and dendritic cells, upon recognition of pathogens through toll-like receptors (TLRs) at the site of infection or tissue injury. In the adaptive immune response, is required for the differentiation of B cells into immunoglobulin-secreting cells. Plays a major role in the differentiation of CD4(+) T cell subsets. Essential factor for the development of T follicular helper (Tfh) cells that are required for the induction of germinal-center formation. Required to drive naive CD4(+) T cells to the Th17 lineage. Also required for proliferation of myeloma cells and the survival of plasmablast cells. Acts as an essential factor in bone homeostasis and on vessels directly or indirectly by induction of VEGF, resulting in increased angiogenesis activity and vascular permeability. Induces, through 'trans-signaling' and synergistically with IL1B and TNF, the production of VEGF. Involved in metabolic controls, is discharged into the bloodstream after muscle contraction increasing lipolysis and improving insulin resistance. 'Trans-signaling' in central nervous system also regulates energy and glucose homeostasis. Mediates, through GLP-1, crosstalk between insulin-sensitive tissues, intestinal L cells and pancreatic islets to adapt to changes in insulin demand. Also acts as a myokine. Plays a protective role during liver injury, being required for maintenance of tissue regeneration. Also has a pivotal role in iron metabolism by regulating HAMP/hepcidin expression upon inflammation or bacterial infection. Through activation of IL6ST-YAP-NOTCH pathway, induces inflammation-induced epithelial regeneration. The chain is Interleukin-6 (IL6) from Oryctolagus cuniculus (Rabbit).